Consider the following 1889-residue polypeptide: Bromodomain adjacent to zinc finger domain protein 2A (1889 aa).

3 disordered regions span residues 1–59 (MEME…NGLS), 384–433 (FGLN…SPAA), and 479–526 (TTPV…GAVA). Residues 35–59 (TNGSPMNFPQQGKSLNGDVNVNGLS) show a composition bias toward polar residues. Positions 332–726 (EGNPVISALD…ESQTPVQGQA (395 aa)) are required for TTF1 binding. Positions 423 to 433 (PAVSPTASPAA) are enriched in low complexity. 2 stretches are compositionally biased toward polar residues: residues 479–489 (TTPVTSPQGSP) and 498–509 (QTVSPARKNVSS). At threonine 499 the chain carries Phosphothreonine. Serine 501 bears the Phosphoserine mark. One can recognise an MBD domain in the interval 538-609 (IATPEEVRLP…EHFSFSPRMP (72 aa)). Threonine 540 carries the phosphothreonine modification. Position 605 is a phosphoserine (serine 605). Residues 638-791 (QAITGKRGRP…ARPSCRADKT (154 aa)) form a disordered region. DNA-binding regions (a.T hook) lie at residues 641 to 653 (TGKR…NEKA) and 662 to 674 (KRGR…IKMP). Residues 648-660 (RNNEKAKNKEVPK) show a composition bias toward basic and acidic residues. Over residues 661-670 (VKRGRGRPPK) the composition is skewed to basic residues. Position 672 is an N6-acetyllysine; by KAT8 (lysine 672). The segment covering 678–701 (NKTDNRLPKKLETQEILSEDDKAK) has biased composition (basic and acidic residues). Positions 686 to 813 (KKLETQEILS…QQAILEEMKK (128 aa)) form a coiled coil. Positions 702–713 (MTKNKKKMRQKV) are enriched in basic residues. Residues 716 to 726 (GESQTPVQGQA) are compositionally biased toward polar residues. Basic and acidic residues-rich tracts occupy residues 731–740 (KQDTKSLKQK) and 748–791 (AEKE…ADKT). Position 790 is an N6-acetyllysine (lysine 790). The region spanning 839 to 904 (SRAFSDCLTI…LKAALHDPGL (66 aa)) is the DDT domain. Lysine 857 is covalently cross-linked (Glycyl lysine isopeptide (Lys-Gly) (interchain with G-Cter in SUMO2)). The tract at residues 1039 to 1063 (EETSGIEEEEEEENTTAVHGRRGRK) is disordered. Serine 1042 carries the phosphoserine modification. Acidic residues predominate over residues 1042–1052 (SGIEEEEEEEN). Residues lysine 1141 and lysine 1163 each participate in a glycyl lysine isopeptide (Lys-Gly) (interchain with G-Cter in SUMO2) cross-link. Disordered stretches follow at residues 1147–1247 (LMEV…GQSQ) and 1269–1397 (LSSS…GRPP). The residue at position 1174 (serine 1174) is a Phosphoserine. Residues 1176–1188 (ARSRGRPRKPKPG) constitute a DNA-binding region (a.T hook 3). Composition is skewed to polar residues over residues 1190 to 1231 (LQPQ…QPSS), 1269 to 1278 (LSSSVLTPDS), and 1331 to 1346 (DQPT…SKPM). A phosphoserine mark is found at serine 1374, serine 1377, and serine 1383. The segment at residues 1390–1402 (PKRRGRPPSKFFK) is a DNA-binding region (a.T hook 4). At serine 1545 the chain carries Phosphoserine. Residues lysine 1662 and lysine 1695 each participate in a glycyl lysine isopeptide (Lys-Gly) (interchain with G-Cter in SUMO2) cross-link. The PHD-type zinc finger occupies 1662–1712 (KVTCLVCRKGDNDEFLLLCDGCDRGCHIYCHRPKMEAVPEGDWFCAVCLSQ). The segment at 1720–1778 (QRPGFPKRGQKRKSSFPLTFPEGDSRRRMLSRSRDSPAVPRYPEDGLSPPKRRRHSMRS) is disordered. Position 1733 is a phosphoserine (serine 1733). Threonine 1738 is modified (phosphothreonine). Positions 1742–1754 (GDSRRRMLSRSRD) are enriched in basic and acidic residues. 2 positions are modified to phosphoserine: serine 1755 and serine 1767. A compositionally biased stretch (basic residues) spans 1769–1778 (PKRRRHSMRS). Residues 1777 to 1881 (RSHHSDLTFC…RFFESRWEEF (105 aa)) form the Bromo domain.

It belongs to the WAL family. In terms of assembly, component of the NoRC-1 ISWI chromatin remodeling complex at least composed of SMARCA1 and BAZ2A/TIP5, which regulates the spacing of histone octamers on the DNA template to facilitate access to DNA. Within the NoRC-1 ISWI chromatin remodeling complex interacts with SMARCA1; the interaction is direct. Component of the NoRC-5 ISWI chromatin remodeling complex (also called the NoRC nucleolar-remodeling complex), at least composed of SMARCA5/SNF2H and BAZ2A/TIP5, which regulates the spacing of histone octamers on the DNA template to facilitate access to DNA. Within the NoRC-5 ISWI chromatin remodeling complexes interacts with SMARCA5/SNF2H; the interaction is direct. Interacts with TTF1; the interaction is required for recruitment of the NoRC-5 ISWI chromatin remodeling complex to rDNA. Interacts with HDAC1. Interacts with SIN3A. Interacts with DNMT1 and DNM3B. Interacts with BEND3 and USP21. Post-translationally, ubiquitinated. Deubiquitinated by USP21 leading to its stabilization. In terms of processing, acetylation at Lys-672 by KAT8/MOF promotes its dissociation from pRNA, affecting heterochromatin formation, nucleosome positioning and rDNA silencing. Deacetylation by SIRT1 in late S phase enhances pRNA-binding, allowing de novo DNA methylation and heterochromatin formation. Acetylation is high during S phase and declines to background levels in late S phase when the silent copies of rRNA genes are replicated.

It localises to the nucleus. Its subcellular location is the nucleolus. Its function is as follows. Regulatory subunit of the ATP-dependent NoRC-1 and NoRC-5 ISWI chromatin remodeling complexes, which form ordered nucleosome arrays on chromatin and facilitate access to DNA during DNA-templated processes such as DNA replication, transcription, and repair. Both complexes regulate the spacing of nucleosomes along the chromatin and have the ability to slide mononucleosomes to the center of a DNA template. Directly stimulates the ATPase activity of SMARCA5 in the NoRC-5 ISWI chromatin remodeling complex. The NoRC-1 ISWI chromatin remodeling complex has a lower ATP hydrolysis rate than the NoRC-5 ISWI chromatin remodeling complex. Within the NoRC-5 ISWI chromatin remodeling complex, mediates silencing of a fraction of rDNA by recruiting histone-modifying enzymes and DNA methyltransferases, leading to heterochromatin formation and transcriptional silencing. In the complex, it plays a central role by being recruited to rDNA and by targeting chromatin modifying enzymes such as HDAC1, leading to repress RNA polymerase I transcription. Recruited to rDNA via its interaction with TTF1 and its ability to recognize and bind histone H4 acetylated on 'Lys-16' (H4K16ac), leading to deacetylation of H4K5ac, H4K8ac, H4K12ac but not H4K16ac. Specifically binds pRNAs, 150-250 nucleotide RNAs that are complementary in sequence to the rDNA promoter; pRNA-binding is required for heterochromatin formation and rDNA silencing. This is Bromodomain adjacent to zinc finger domain protein 2A (Baz2a) from Mus musculus (Mouse).